The chain runs to 327 residues: MGSPNAAAETDLTTDDFIGDTRRDSGSDTETNTDCDGEDLPLLLLPAPPGHFEEGERVLAKHSDCFYEAKVLKVEFKDNEWKYFVHYIGWNKSWDEWIRLDCLLKHSDENIEKQKEQGLKQQGIKSAMAWKVSKMKPRSPNVARGRKRKQDSVDTEKNVLPSDNLLSFNIPPALRKQLLDDFEFVTQMQKLVQLPRSPNVDGILKKYIDSQMKKHGRVTDSLEEILKGLRCYFDKALPVMLLYNNERKQYEESVSGGVSPSTVYGAEHLLRLFVKLPELLVHVNMAEETLKELQDNFVDILRFLRKNQSVLFVSTYKAVEEMEKKEG.

The interval 1-40 (MGSPNAAAETDLTTDDFIGDTRRDSGSDTETNTDCDGEDL) is disordered. A Tudor-knot domain is found at 52–101 (FEEGERVLAKHSDCFYEAKVLKVEFKDNEWKYFVHYIGWNKSWDEWIRLD). The segment at 133 to 156 (SKMKPRSPNVARGRKRKQDSVDTE) is disordered. The MRG domain occupies 162-327 (SDNLLSFNIP…AVEEMEKKEG (166 aa)).

Interacts with HAM1 and HAM2. Interacts (via MRG domain) with CO. Component of the NuA4 histone acetyltransferase complex. In terms of tissue distribution, ubiquitous. Mainly expressed in the vasculature of cotyledons and leaves, and in roots and inflorescences.

The protein localises to the nucleus. Its function is as follows. Chromatin remodeling factor. Acts as a 'reader' protein by binding to H3K4me3 and H3K36me3 to control histone H4 acetylation. Increases the transcriptional levels of the flowering time genes FLC and FT. Binds the chromatin at the FT promoter upon interaction with CO. The chain is Protein MRG2 from Arabidopsis thaliana (Mouse-ear cress).